A 515-amino-acid polypeptide reads, in one-letter code: Probable cytosol aminopeptidase (515 aa).

Mn(2+) contacts are provided by Lys-279 and Asp-284. Lys-291 is a catalytic residue. Positions 302, 361, and 363 each coordinate Mn(2+). Residue Arg-365 is part of the active site.

Belongs to the peptidase M17 family. Mn(2+) serves as cofactor.

The protein resides in the cytoplasm. The catalysed reaction is Release of an N-terminal amino acid, Xaa-|-Yaa-, in which Xaa is preferably Leu, but may be other amino acids including Pro although not Arg or Lys, and Yaa may be Pro. Amino acid amides and methyl esters are also readily hydrolyzed, but rates on arylamides are exceedingly low.. It catalyses the reaction Release of an N-terminal amino acid, preferentially leucine, but not glutamic or aspartic acids.. Its function is as follows. Presumably involved in the processing and regular turnover of intracellular proteins. Catalyzes the removal of unsubstituted N-terminal amino acids from various peptides. The protein is Probable cytosol aminopeptidase of Mycobacterium bovis (strain ATCC BAA-935 / AF2122/97).